Here is a 609-residue protein sequence, read N- to C-terminus: MKIQLRSHESTYGRKMAGTRALWKANGMKVEQFNKPIIAIVNSFTQFVPGHAHLHEVGQFVKSEIEKQGCFAAEFNTIAIDDGIAMGHNGMLYSLPSRDLIADSVEYMIQAHKADAMVCISNCDKITPGMLMASMRLNIPTVFVSGGPMEAGNLNGNRLDLIEVMVQSADAFVSDEQVRQVELNACPTCGSCSGMFTANSMNCLNEAIGLALPGNGTIVATHTRRKQLFADAASLIVKNTYKYYEKGNENVLPLSIATRESFLNAMTLDIAMGGSTNTILHLLAIAHEAGVDFTMQDIDTLSRKTPCLCKISPNASKYYIQDVNRAGGIIGILSELHKSKLIDVSAKRVDGLTVAEAIRQFDICSTDVTKEALNKYKSAPGNRFNLVMASQQNDYDTLDTDRMNGCIRSTKYAYSEDGGLAILKGNIAMDGCVVKTAGIDENIFLFSGPAKVFDSQESACRGILEGKIVSGDVVVIIYEGPKGGPGMQEMLYPTSYIKSRHLGKGCALITDGRFSGGTSGLSIGHISPEAAASGNIGLVRNNDIIAINIPERTINVLLSEEELAKRRKEELQRGDAAFTPPNRKRIVPKTLRAYASMVSSADKGAVRII.

Mg(2+) is bound at residue Asp82. [2Fe-2S] cluster is bound at residue Cys123. Mg(2+) contacts are provided by Asp124 and Lys125. The residue at position 125 (Lys125) is an N6-carboxylysine. Cys192 lines the [2Fe-2S] cluster pocket. Mg(2+) is bound at residue Glu489. The Proton acceptor role is filled by Ser515.

Belongs to the IlvD/Edd family. In terms of assembly, homodimer. [2Fe-2S] cluster serves as cofactor. Requires Mg(2+) as cofactor.

The catalysed reaction is (2R)-2,3-dihydroxy-3-methylbutanoate = 3-methyl-2-oxobutanoate + H2O. It carries out the reaction (2R,3R)-2,3-dihydroxy-3-methylpentanoate = (S)-3-methyl-2-oxopentanoate + H2O. It functions in the pathway amino-acid biosynthesis; L-isoleucine biosynthesis; L-isoleucine from 2-oxobutanoate: step 3/4. Its pathway is amino-acid biosynthesis; L-valine biosynthesis; L-valine from pyruvate: step 3/4. Functions in the biosynthesis of branched-chain amino acids. Catalyzes the dehydration of (2R,3R)-2,3-dihydroxy-3-methylpentanoate (2,3-dihydroxy-3-methylvalerate) into 2-oxo-3-methylpentanoate (2-oxo-3-methylvalerate) and of (2R)-2,3-dihydroxy-3-methylbutanoate (2,3-dihydroxyisovalerate) into 2-oxo-3-methylbutanoate (2-oxoisovalerate), the penultimate precursor to L-isoleucine and L-valine, respectively. This Azobacteroides pseudotrichonymphae genomovar. CFP2 protein is Dihydroxy-acid dehydratase.